The chain runs to 241 residues: Leucyl/phenylalanyl-tRNA--protein transferase (241 aa).

It belongs to the L/F-transferase family.

It localises to the cytoplasm. The enzyme catalyses N-terminal L-lysyl-[protein] + L-leucyl-tRNA(Leu) = N-terminal L-leucyl-L-lysyl-[protein] + tRNA(Leu) + H(+). The catalysed reaction is N-terminal L-arginyl-[protein] + L-leucyl-tRNA(Leu) = N-terminal L-leucyl-L-arginyl-[protein] + tRNA(Leu) + H(+). It carries out the reaction L-phenylalanyl-tRNA(Phe) + an N-terminal L-alpha-aminoacyl-[protein] = an N-terminal L-phenylalanyl-L-alpha-aminoacyl-[protein] + tRNA(Phe). Its function is as follows. Functions in the N-end rule pathway of protein degradation where it conjugates Leu, Phe and, less efficiently, Met from aminoacyl-tRNAs to the N-termini of proteins containing an N-terminal arginine or lysine. The protein is Leucyl/phenylalanyl-tRNA--protein transferase of Colwellia psychrerythraea (strain 34H / ATCC BAA-681) (Vibrio psychroerythus).